The primary structure comprises 327 residues: Phage tubulin-like protein (327 aa).

GTP contacts are provided by residues 14–15 (GA) and 107–109 (ASG). A disordered region spans residues 303-327 (KANMRKRQSTLDVDDQATSSGLVFD). Residues 318–327 (QATSSGLVFD) show a composition bias toward polar residues.

This sequence belongs to the FtsZ family. PhuZ subfamily. As to quaternary structure, homomultimer. Polymerizes in a strictly GTP-dependent manner.

The protein localises to the host cytoplasm. The catalysed reaction is GTP + H2O = GDP + phosphate + H(+). The non-hydrolyzable GTP analog GMPCPP stabilizes filaments, which never disassemble. A tubulin-like GTPase that forms filaments, which are required for positioning viral DNA and capsids in the middle of the host cell for optimal replication. The motor component of a partition system which pushes phage DNA (encased by protein gp105) to the center of the bacterial host cell. Also required for movement of phage capsids to the vicinity of the viral DNA and rotation of the encased viral DNA at midcell. Forms filaments during the lytic phase, which position phage DNA at the center of the bacterial host cell. Filaments have a three-stranded intertwined architecture and form a spindle-like cytoskeleton within the infected cell. Has GTPase activity. Filaments grow at the plus end and depolymerize at the minus end, a process called treadmilling, and switch from growing in a polar manner to catastrophic depolymerization, i.e. they display dynamic instability, like tubulin. In infected host cells the filament ends close to the cell pole are relatively stable, while the other end near the phage DNA is highly dynamic. Both capsid movement and DNA rotation probably require treadmilling. This Pseudomonas phage phiKZ protein is Phage tubulin-like protein.